The sequence spans 226 residues: Enolase-phosphatase E1 (226 aa).

Mg(2+) contacts are provided by Asp9 and Glu11. Substrate is bound by residues 115–116 and Lys160; that span reads SS. Asp185 contacts Mg(2+).

This sequence belongs to the HAD-like hydrolase superfamily. MasA/MtnC family. As to quaternary structure, monomer. Mg(2+) serves as cofactor.

The protein resides in the cytoplasm. Its subcellular location is the nucleus. It carries out the reaction 5-methylsulfanyl-2,3-dioxopentyl phosphate + H2O = 1,2-dihydroxy-5-(methylsulfanyl)pent-1-en-3-one + phosphate. Its pathway is amino-acid biosynthesis; L-methionine biosynthesis via salvage pathway; L-methionine from S-methyl-5-thio-alpha-D-ribose 1-phosphate: step 3/6. It participates in amino-acid biosynthesis; L-methionine biosynthesis via salvage pathway; L-methionine from S-methyl-5-thio-alpha-D-ribose 1-phosphate: step 4/6. Functionally, bifunctional enzyme that catalyzes the enolization of 2,3-diketo-5-methylthiopentyl-1-phosphate (DK-MTP-1-P) into the intermediate 2-hydroxy-3-keto-5-methylthiopentenyl-1-phosphate (HK-MTPenyl-1-P), which is then dephosphorylated to form the acireductone 1,2-dihydroxy-3-keto-5-methylthiopentene (DHK-MTPene). This Zygosaccharomyces rouxii (strain ATCC 2623 / CBS 732 / NBRC 1130 / NCYC 568 / NRRL Y-229) protein is Enolase-phosphatase E1.